The primary structure comprises 452 residues: Protein henna (452 aa).

Residues 36–107 enclose the ACT domain; sequence FSPKDSSLSS…EQCSYFNIIS (72 aa). Position 272 is a phosphoserine; by CaMK2 (S272). Fe cation is bound by residues H284, H289, and E329.

This sequence belongs to the biopterin-dependent aromatic amino acid hydroxylase family. Requires Fe(2+) as cofactor. As to expression, phenylalanine hydrolase activity is found in yolk granules of embryos, and female abdomen and fat body tissues. Tryptophan hydroxylase is expressed in serotonergic neurons. Both enzymes are present in cuticular tissues.

The catalysed reaction is (6R)-L-erythro-5,6,7,8-tetrahydrobiopterin + L-phenylalanine + O2 = (4aS,6R)-4a-hydroxy-L-erythro-5,6,7,8-tetrahydrobiopterin + L-tyrosine. The enzyme catalyses (6R)-L-erythro-5,6,7,8-tetrahydrobiopterin + L-tryptophan + O2 = 5-hydroxy-L-tryptophan + (4aS,6R)-4a-hydroxy-L-erythro-5,6,7,8-tetrahydrobiopterin. It functions in the pathway amino-acid degradation; L-phenylalanine degradation; acetoacetate and fumarate from L-phenylalanine: step 1/6. With respect to regulation, N-terminal region of PAH is thought to contain allosteric binding sites for phenylalanine and to constitute an 'inhibitory' domain that regulates the activity of a catalytic domain in the C-terminal portion of the molecule. The protein is Protein henna (Hn) of Drosophila melanogaster (Fruit fly).